A 267-amino-acid polypeptide reads, in one-letter code: Glucosamine-6-phosphate deaminase (267 aa).

Asp-72 serves as the catalytic Proton acceptor; for enolization step. Catalysis depends on Asp-141, which acts as the For ring-opening step. Residue His-143 is the Proton acceptor; for ring-opening step of the active site. The active-site For ring-opening step is Glu-148.

This sequence belongs to the glucosamine/galactosamine-6-phosphate isomerase family. NagB subfamily. Homohexamer.

It catalyses the reaction alpha-D-glucosamine 6-phosphate + H2O = beta-D-fructose 6-phosphate + NH4(+). Its pathway is amino-sugar metabolism; N-acetylneuraminate degradation; D-fructose 6-phosphate from N-acetylneuraminate: step 5/5. Allosterically activated by N-acetylglucosamine 6-phosphate (GlcNAc6P). Its function is as follows. Catalyzes the reversible isomerization-deamination of glucosamine 6-phosphate (GlcN6P) to form fructose 6-phosphate (Fru6P) and ammonium ion. The sequence is that of Glucosamine-6-phosphate deaminase from Mannheimia succiniciproducens (strain KCTC 0769BP / MBEL55E).